The following is a 362-amino-acid chain: UDP-N-acetylglucosamine--N-acetylmuramyl-(pentapeptide) pyrophosphoryl-undecaprenol N-acetylglucosamine transferase (362 aa).

Residues T10–G12, N124, S194, I249, and Q294 contribute to the UDP-N-acetyl-alpha-D-glucosamine site.

This sequence belongs to the glycosyltransferase 28 family. MurG subfamily.

It localises to the cell membrane. The catalysed reaction is Mur2Ac(oyl-L-Ala-gamma-D-Glu-L-Lys-D-Ala-D-Ala)-di-trans,octa-cis-undecaprenyl diphosphate + UDP-N-acetyl-alpha-D-glucosamine = beta-D-GlcNAc-(1-&gt;4)-Mur2Ac(oyl-L-Ala-gamma-D-Glu-L-Lys-D-Ala-D-Ala)-di-trans,octa-cis-undecaprenyl diphosphate + UDP + H(+). It functions in the pathway cell wall biogenesis; peptidoglycan biosynthesis. Functionally, cell wall formation. Catalyzes the transfer of a GlcNAc subunit on undecaprenyl-pyrophosphoryl-MurNAc-pentapeptide (lipid intermediate I) to form undecaprenyl-pyrophosphoryl-MurNAc-(pentapeptide)GlcNAc (lipid intermediate II). The chain is UDP-N-acetylglucosamine--N-acetylmuramyl-(pentapeptide) pyrophosphoryl-undecaprenol N-acetylglucosamine transferase from Pediococcus pentosaceus (strain ATCC 25745 / CCUG 21536 / LMG 10740 / 183-1w).